The primary structure comprises 554 residues: RecBCD enzyme subunit RecD (554 aa).

Residue 155 to 162 participates in ATP binding; that stretch reads GGPGTGKT.

It belongs to the RecD family. Heterotrimer of RecB, RecC and RecD. All subunits contribute to DNA-binding.

The catalysed reaction is Couples ATP hydrolysis with the unwinding of duplex DNA at the replication fork by translocating in the 5'-3' direction. This creates two antiparallel DNA single strands (ssDNA). The leading ssDNA polymer is the template for DNA polymerase III holoenzyme which synthesizes a continuous strand.. The enzyme catalyses ATP + H2O = ADP + phosphate + H(+). A helicase/nuclease that prepares dsDNA breaks (DSB) for recombinational DNA repair. Binds to DSBs and unwinds DNA via a highly rapid and processive ATP-dependent bidirectional helicase activity. Holoenzyme degrades any linearized DNA that is unable to undergo homologous recombination. In the holoenzyme this subunit has ssDNA-dependent ATPase and 5'-3' helicase activity. When added to pre-assembled RecBC greatly stimulates nuclease activity and augments holoenzyme processivity. Unlike the case in E.coli, suppresses RecA-dependent homologous recombination, is instead required for single-strand annealing pathway repair of DSB. The polypeptide is RecBCD enzyme subunit RecD (Mycolicibacterium smegmatis (strain ATCC 700084 / mc(2)155) (Mycobacterium smegmatis)).